The sequence spans 348 residues: GTPase Obg (348 aa).

The Obg domain occupies 1–160 (MHFLDQAKIF…MWVWLRLKLL (160 aa)). The disordered stretch occupies residues 120-145 (RGGDGGRGNASYKTSTNRAPRQHGPG). The region spanning 161-328 (ADAGLVGLPN…VLDKLLEAIG (168 aa)) is the OBG-type G domain. Residues 167-174 (GLPNAGKS), 192-196 (FTTLR), 213-216 (DIPG), 280-283 (NKID), and 309-311 (SGA) contribute to the GTP site. Positions 174 and 194 each coordinate Mg(2+). Residues 326–348 (AIGQPEPGPDADEEEKGGDWSPI) are disordered.

The protein belongs to the TRAFAC class OBG-HflX-like GTPase superfamily. OBG GTPase family. In terms of assembly, monomer. Mg(2+) serves as cofactor.

The protein localises to the cytoplasm. Functionally, an essential GTPase which binds GTP, GDP and possibly (p)ppGpp with moderate affinity, with high nucleotide exchange rates and a fairly low GTP hydrolysis rate. Plays a role in control of the cell cycle, stress response, ribosome biogenesis and in those bacteria that undergo differentiation, in morphogenesis control. This is GTPase Obg from Sphingopyxis alaskensis (strain DSM 13593 / LMG 18877 / RB2256) (Sphingomonas alaskensis).